The primary structure comprises 800 residues: Putative antiporter subunit mnhA2 (800 aa).

The next 20 membrane-spanning stretches (helical) occupy residues 1-21 (MSLV…LLMS), 33-53 (IALV…PSVA), 78-98 (GLSL…FFYA), 118-138 (LFMF…MYIF), 167-187 (FMIT…LYIM), 207-227 (GLFI…SAQF), 241-261 (TPVS…FLLL), 273-293 (YIYI…ITAL), 300-320 (GILA…VGIG), 331-351 (IASI…NHAI), 387-407 (LVMT…GFLS), 424-444 (FSLI…IFTF), 472-492 (PWLF…IFFV), 527-547 (GFNI…VLAI), 595-615 (IIMT…RIGL), 627-647 (GALE…LIFI), 651-671 (LTMV…FIAM), 676-696 (LALT…VSFS), 712-732 (IIKI…IFIT), and 768-788 (LDTL…YTLL).

It belongs to the CPA3 antiporters (TC 2.A.63) subunit A family. As to quaternary structure, may form a heterooligomeric complex that consists of seven subunits: mnhA2, mnhB2, mnhC2, mnhD2, mnhE2, mnhF2 and mnhG2.

The protein resides in the cell membrane. This Staphylococcus aureus (strain Mu3 / ATCC 700698) protein is Putative antiporter subunit mnhA2 (mnhA2).